A 48-amino-acid chain; its full sequence is Large ribosomal subunit protein bL32 (48 aa).

A compositionally biased stretch (basic residues) spans 1–20; sequence MAVPKRRVSKTRAAKRRTHY. Residues 1 to 48 form a disordered region; sequence MAVPKRRVSKTRAAKRRTHYKVSLPMPVKDKDGSYKMPHRANPTTKEY.

The protein belongs to the bacterial ribosomal protein bL32 family.

This Campylobacter jejuni subsp. doylei (strain ATCC BAA-1458 / RM4099 / 269.97) protein is Large ribosomal subunit protein bL32.